We begin with the raw amino-acid sequence, 397 residues long: 3-hydroxybenzoate 6-hydroxylase (397 aa).

It belongs to the 3-hydroxybenzoate 6-hydroxylase family. As to quaternary structure, monomer. FAD is required as a cofactor.

It catalyses the reaction 3-hydroxybenzoate + NADH + O2 + H(+) = 2,5-dihydroxybenzoate + NAD(+) + H2O. Inhibited by copper, mercury and iron ions. In terms of biological role, catalyzes the NAD- or NADP-dependent conversion of 3-hydroxybenzoate to gentisate. NAD and NADP function equally well. In Klebsiella oxytoca, this protein is 3-hydroxybenzoate 6-hydroxylase (mhbM).